The sequence spans 538 residues: Putative cysteine ligase BshC (538 aa).

Residues Lys460–Leu484 adopt a coiled-coil conformation.

Belongs to the BshC family.

Involved in bacillithiol (BSH) biosynthesis. May catalyze the last step of the pathway, the addition of cysteine to glucosamine malate (GlcN-Mal) to generate BSH. This Bacillus thuringiensis (strain Al Hakam) protein is Putative cysteine ligase BshC.